The primary structure comprises 843 residues: Protein P (843 aa).

The tract at residues 1–177 (MPLSYPHFRK…FCGSQYSWEQ (177 aa)) is terminal protein domain (TP). Positions 178–346 (ELQHGSTSLN…YCLSHIINLL (169 aa)) are spacer. Disordered stretches follow at residues 228 to 255 (KQGQ…RWPA) and 284 to 314 (EANP…SVGS). A compositionally biased stretch (basic residues) spans 239–249 (RSGRLRSRVHT). A polymerase/reverse transcriptase domain (RT) region spans residues 347-690 (EDWGPCYEHG…YMNLYPVARQ (344 aa)). In terms of domain architecture, Reverse transcriptase spans 357–600 (EHHIRTPRTP…YNLHFMGYVI (244 aa)). Residues Asp-429, Asp-551, and Asp-552 each coordinate Mg(2+).

The protein belongs to the hepadnaviridae P protein family.

It carries out the reaction DNA(n) + a 2'-deoxyribonucleoside 5'-triphosphate = DNA(n+1) + diphosphate. It catalyses the reaction Endonucleolytic cleavage to 5'-phosphomonoester.. Activated by host HSP70 and HSP40 in vitro to be able to bind the epsilon loop of the pgRNA. Because deletion of the RNase H region renders the protein partly chaperone-independent, the chaperones may be needed indirectly to relieve occlusion of the RNA-binding site by this domain. Inhibited by several reverse-transcriptase inhibitors: Lamivudine, Adefovir and Entecavir. In terms of biological role, multifunctional enzyme that converts the viral RNA genome into dsDNA in viral cytoplasmic capsids. This enzyme displays a DNA polymerase activity that can copy either DNA or RNA templates, and a ribonuclease H (RNase H) activity that cleaves the RNA strand of RNA-DNA heteroduplexes in a partially processive 3'- to 5'-endonucleasic mode. Neo-synthesized pregenomic RNA (pgRNA) are encapsidated together with the P protein, and reverse-transcribed inside the nucleocapsid. Initiation of reverse-transcription occurs first by binding the epsilon loop on the pgRNA genome, and is initiated by protein priming, thereby the 5'-end of (-)DNA is covalently linked to P protein. Partial (+)DNA is synthesized from the (-)DNA template and generates the relaxed circular DNA (RC-DNA) genome. After budding and infection, the RC-DNA migrates in the nucleus, and is converted into a plasmid-like covalently closed circular DNA (cccDNA). The activity of P protein does not seem to be necessary for cccDNA generation, and is presumably released from (+)DNA by host nuclear DNA repair machinery. The chain is Protein P from Hepatitis B virus genotype F2 subtype adw4q (isolate Senegal/9203) (HBV-F).